The following is a 426-amino-acid chain: Pyrophosphate--fructose 6-phosphate 1-phosphotransferase 2 (426 aa).

A diphosphate-binding site is contributed by glycine 15. Aspartate 114 serves as a coordination point for Mg(2+). Residues threonine 140–aspartate 142, methionine 186–arginine 188, glutamate 247, and tyrosine 308–arginine 311 each bind substrate. The Proton acceptor role is filled by aspartate 142.

This sequence belongs to the phosphofructokinase type A (PFKA) family. PPi-dependent PFK group II subfamily. Clade 'Short' sub-subfamily. Homotetramer. Mg(2+) is required as a cofactor.

The protein resides in the cytoplasm. The enzyme catalyses beta-D-fructose 6-phosphate + diphosphate = beta-D-fructose 1,6-bisphosphate + phosphate + H(+). The protein operates within carbohydrate degradation; glycolysis; D-glyceraldehyde 3-phosphate and glycerone phosphate from D-glucose: step 3/4. Non-allosteric. Functionally, catalyzes the phosphorylation of D-fructose 6-phosphate, the first committing step of glycolysis. Uses inorganic phosphate (PPi) as phosphoryl donor instead of ATP like common ATP-dependent phosphofructokinases (ATP-PFKs), which renders the reaction reversible, and can thus function both in glycolysis and gluconeogenesis. Consistently, PPi-PFK can replace the enzymes of both the forward (ATP-PFK) and reverse (fructose-bisphosphatase (FBPase)) reactions. The protein is Pyrophosphate--fructose 6-phosphate 1-phosphotransferase 2 (pfk2) of Trichomonas vaginalis (strain ATCC PRA-98 / G3).